A 257-amino-acid polypeptide reads, in one-letter code: uncharacterized protein (257 aa).

This is an uncharacterized protein from Acidianus bottle-shaped virus (isolate Italy/Pozzuoli) (ABV).